The primary structure comprises 361 residues: Fructose-bisphosphate aldolase (361 aa).

Thr2 carries the N-acetylthreonine modification. The substrate site is built by Arg56 and Lys147. The active-site Proton acceptor is the Glu188. Catalysis depends on Lys230, which acts as the Schiff-base intermediate with dihydroxyacetone-P.

It belongs to the class I fructose-bisphosphate aldolase family. As to quaternary structure, homotetramer. In terms of tissue distribution, mainly expressed in the heads and partly in the thoraxes of adult flies. As to expression, expressed in all adult tissues. The Alpha-beta mRNA shows strong expression in the abdomens of adults. Mainly expressed in adult abdominal regions and is also expressed in lesser amounts in other parts of the body. The Beta-gamma mRNA is expressed in adult heads.

It catalyses the reaction beta-D-fructose 1,6-bisphosphate = D-glyceraldehyde 3-phosphate + dihydroxyacetone phosphate. Its pathway is carbohydrate degradation; glycolysis; D-glyceraldehyde 3-phosphate and glycerone phosphate from D-glucose: step 4/4. Its function is as follows. Enzyme of the glycolytic pathway. Glycolysis is essential in glial cells but not in neurons; neurons rely on the citric acid cycle for their energy needs, and on lactate and alanine secreted into the hemolymph by glial cells to fuel it. May take part in developmental stage-specific or tissue -specific sugar-phosphate metabolisms. Protein acts on two substrates fructose 1,6-bisphosphate and fructose 1-phosphate (like other class I aldolases). The chain is Fructose-bisphosphate aldolase from Drosophila melanogaster (Fruit fly).